The sequence spans 519 residues: Asteroid homolog 1 (519 aa).

It belongs to the asteroid family.

It is found in the cytoplasm. The protein localises to the mitochondrion. The chain is Asteroid homolog 1 (ast1) from Schizosaccharomyces pombe (strain 972 / ATCC 24843) (Fission yeast).